The primary structure comprises 1082 residues: Error-prone DNA polymerase (1082 aa).

The protein belongs to the DNA polymerase type-C family. DnaE2 subfamily.

Its subcellular location is the cytoplasm. It carries out the reaction DNA(n) + a 2'-deoxyribonucleoside 5'-triphosphate = DNA(n+1) + diphosphate. Functionally, DNA polymerase involved in damage-induced mutagenesis and translesion synthesis (TLS). It is not the major replicative DNA polymerase. The polypeptide is Error-prone DNA polymerase (Xanthomonas campestris pv. campestris (strain B100)).